A 515-amino-acid chain; its full sequence is Sodium/hydrogen exchanger 9B1 (515 aa).

The span at 1–10 shows a compositional bias: basic and acidic residues; the sequence is MHTTESKNEH. A disordered region spans residues 1–32; that stretch reads MHTTESKNEHLEDENFQTSTTPQSLIDPNNTA. Polar residues predominate over residues 16 to 32; the sequence is FQTSTTPQSLIDPNNTA. Helical transmembrane passes span 66 to 86, 95 to 115, 116 to 136, 152 to 172, 187 to 207, 215 to 235, 260 to 280, 284 to 304, 337 to 357, 368 to 388, 407 to 427, 431 to 451, and 472 to 492; these read VIITNGVILFVIWCMTWSILG, LFGLFIIFYSAIIGGKILQLI, RIPLVPPLPPLLGMLLAGFTI, WSSILRSIALTIILIRAGLGL, LAVGPCLMEASAAAVFSHFIM, FLLGFVLGAVSPAVVVPYMMV, ILAITGFNTCLSIVFSSGGIL, IASIRNVCISLLAGIVLGFFV, IGLHGSGGLCTLVLSFIAGTK, IITTVWDIFQPLLFGLVGAEV, LALCVRILTTYLLMCFAGFSF, IFIALAWMPKATVQAVLGPLA, and VAFLAILITAPNGALLMGILG.

This sequence belongs to the monovalent cation:proton antiporter 1 (CPA1) transporter (TC 2.A.36) family. As to expression, expressed only in the testis.

It localises to the cell projection. The protein localises to the cilium. The protein resides in the flagellum membrane. Sperm-specific Na(+)/H(+) exchanger involved in intracellular pH regulation of spermatozoa. Involved in sperm motility and fertility. In Homo sapiens (Human), this protein is Sodium/hydrogen exchanger 9B1.